The chain runs to 457 residues: ATP synthase subunit beta (457 aa).

147-154 serves as a coordination point for ATP; that stretch reads GGAGVGKT.

The protein belongs to the ATPase alpha/beta chains family. F-type ATPases have 2 components, CF(1) - the catalytic core - and CF(0) - the membrane proton channel. CF(1) has five subunits: alpha(3), beta(3), gamma(1), delta(1), epsilon(1). CF(0) has three main subunits: a(1), b(2) and c(9-12). The alpha and beta chains form an alternating ring which encloses part of the gamma chain. CF(1) is attached to CF(0) by a central stalk formed by the gamma and epsilon chains, while a peripheral stalk is formed by the delta and b chains.

Its subcellular location is the cell inner membrane. It carries out the reaction ATP + H2O + 4 H(+)(in) = ADP + phosphate + 5 H(+)(out). Functionally, produces ATP from ADP in the presence of a proton gradient across the membrane. The catalytic sites are hosted primarily by the beta subunits. The polypeptide is ATP synthase subunit beta (Actinobacillus pleuropneumoniae serotype 3 (strain JL03)).